The following is a 199-amino-acid chain: ATP-dependent Clp protease proteolytic subunit 2 (199 aa).

Residue Ser-98 is the Nucleophile of the active site. His-123 is an active-site residue.

This sequence belongs to the peptidase S14 family. In terms of assembly, fourteen ClpP subunits assemble into 2 heptameric rings which stack back to back to give a disk-like structure with a central cavity, resembling the structure of eukaryotic proteasomes.

Its subcellular location is the cytoplasm. It carries out the reaction Hydrolysis of proteins to small peptides in the presence of ATP and magnesium. alpha-casein is the usual test substrate. In the absence of ATP, only oligopeptides shorter than five residues are hydrolyzed (such as succinyl-Leu-Tyr-|-NHMec, and Leu-Tyr-Leu-|-Tyr-Trp, in which cleavage of the -Tyr-|-Leu- and -Tyr-|-Trp bonds also occurs).. In terms of biological role, cleaves peptides in various proteins in a process that requires ATP hydrolysis. Has a chymotrypsin-like activity. Plays a major role in the degradation of misfolded proteins. The protein is ATP-dependent Clp protease proteolytic subunit 2 of Treponema pallidum (strain Nichols).